A 439-amino-acid chain; its full sequence is Agnestins biosynthesis cluster transcriptional coactivator AgnL9 (439 aa).

The 71-residue stretch at 79 to 149 (MTIQTQLLAC…EPGHITHSAL (71 aa)) folds into the HTH iclR-type domain. A DNA-binding region (H-T-H motif) is located at residues 109–128 (MKDVSELIDVPENQLGRIVR).

It localises to the nucleus. Its function is as follows. Transcriptional coactivator; part of the gene cluster that mediates the biosynthesis of agnestins, dihydroxy-xanthone metabolites. The chain is Agnestins biosynthesis cluster transcriptional coactivator AgnL9 from Paecilomyces divaricatus (Penicillium divaricatum).